The sequence spans 397 residues: Aurora kinase A (397 aa).

Residues 1 to 118 are disordered; that stretch reads MDRCKENCVS…SIQKTEDSKK (118 aa). Composition is skewed to polar residues over residues 29–55 and 84–102; these read QIPS…SQRV and RLSN…SGNN. Phosphoserine is present on residues S40 and S50. Residues 103 to 118 are compositionally biased toward basic and acidic residues; the sequence is SEKEQTSIQKTEDSKK. Residues 126–376 form the Protein kinase domain; the sequence is FDIGRPLGKG…LAEVLEHPWI (251 aa). ATP contacts are provided by residues K136, K155, and 203 to 206; that span reads LEYA. D249 acts as the Proton acceptor in catalysis. K251 participates in a covalent cross-link: Glycyl lysine isopeptide (Lys-Gly) (interchain with G-Cter in SUMO2). ATP is bound by residues 253 to 254 and D267; that span reads EN. An activation segment region spans residues 273–286; it reads HAPSSRRTTLCGTL. Residues T280 and T281 each carry the phosphothreonine modification. S335 is modified (phosphoserine; by PKA and PAK). Residues 378–387 show a composition bias toward polar residues; sequence ANSSKPPTGH. Residues 378–397 form a disordered region; the sequence is ANSSKPPTGHNSKEATSKSS. Residues 388–397 show a composition bias toward basic and acidic residues; that stretch reads NSKEATSKSS.

The protein belongs to the protein kinase superfamily. Ser/Thr protein kinase family. Aurora subfamily. As to quaternary structure, part of a complex composed of NEDD9, AURKA and CTTN; within the complex NEDD9 acts as a scaffold protein and is required for complex formation. Identified in a complex with AUNIP and NIN. Interacts with CPEB1, JTB, TACC1, TPX2, PPP2CA, as well as with the protein phosphatase type 1 (PP1) isoforms PPP1CA, PPP1CB and PPP1CC. Also interacts with its substrates ARHGEF2, BORA, KIF2A, PARD3, and p53/TP53. Interaction with BORA promotes phosphorylation of PLK1. Interacts with FBXL7 and CIMAP3. Interacts with GADD45A, competing with its oligomerization. Interacts (via C-terminus) with AUNIP (via C-terminus). Interacts with SIRT2. Interacts with FRY; this interaction facilitates AURKA-mediated PLK1 phosphorylation. Interacts with MYCN; interaction is phospho-independent and triggers AURKA activation; AURKA competes with FBXW7 for binding to unphosphorylated MYCN but not for binding to phosphorylated MYCN. Interacts with HNRNPU. Interacts with AAAS. Interacts with KLHL18 and CUL3. Interacts with FOXP1. Interacts with HDAC6; AURKA-mediated phosphorylation of HDAC6 promotes deacetylation of alpha-tubulin. In terms of processing, activated by phosphorylation at Thr-281; this brings about a change in the conformation of the activation segment. Phosphorylation at Thr-281 varies during the cell cycle and is highest during M phase. Autophosphorylated at Thr-281 upon TPX2 binding. Thr-281 can be phosphorylated by several kinases, including PAK and PKA. Protein phosphatase type 1 (PP1) binds AURKA and inhibits its activity by dephosphorylating Thr-281 during mitosis. Phosphorylation at Ser-335 decreases the kinase activity. PPP2CA controls degradation by dephosphorylating Ser-52 at the end of mitosis. Phosphorylated in embryonic brain neurons. Ubiquitinated by CHFR, leading to its degradation by the proteasome. Ubiquitinated by the anaphase-promoting complex (APC), leading to its degradation by the proteasome. Ubiquitinated by the E3 ubiquitin-protein ligase complex SCF(FBXL7) during mitosis, leading to its degradation by the proteasome. Ubiquitinated by the CUL3-KLHL18 ligase leading to its activation at the centrosome which is required for initiating mitotic entry. Ubiquitination mediated by CUL3-KLHL18 ligase does not lead to its degradation by the proteasome. Detected in neurons in brain cortex and hippocampus (at protein level). Expressed in mammary gland and tumor.

Its subcellular location is the cytoplasm. The protein localises to the cytoskeleton. The protein resides in the microtubule organizing center. It localises to the centrosome. It is found in the spindle pole. Its subcellular location is the centriole. The protein localises to the cell projection. The protein resides in the neuron projection. It localises to the cilium. It is found in the cilium basal body. Its subcellular location is the basolateral cell membrane. The enzyme catalyses L-seryl-[protein] + ATP = O-phospho-L-seryl-[protein] + ADP + H(+). It catalyses the reaction L-threonyl-[protein] + ATP = O-phospho-L-threonyl-[protein] + ADP + H(+). Activation of CDK1, appears to be an upstream event of AURKA activation. Phosphatase inhibitor-2 (PPP1R2) and TPX2 act also as activators. Inactivated by the G2 checkpoint. Inhibited by GADD45A and p53/TP53, and through dephosphorylation by protein phosphatase type 1 (PP1). MLN8054 is also a potent and selective inhibitor. Activated during the early phase of cilia disassembly in the presence of FBXL7 and CIMAP3. Inhibited by the small molecule inhibitor VX-680. Its function is as follows. Mitotic serine/threonine kinase that contributes to the regulation of cell cycle progression. Associates with the centrosome and the spindle microtubules during mitosis and plays a critical role in various mitotic events including the establishment of mitotic spindle, centrosome duplication, centrosome separation as well as maturation, chromosomal alignment, spindle assembly checkpoint, and cytokinesis. Required for normal spindle positioning during mitosis and for the localization of NUMA1 and DCTN1 to the cell cortex during metaphase. Required for initial activation of CDK1 at centrosomes. Phosphorylates numerous target proteins, including ARHGEF2, BORA, BRCA1, CDC25B, DLGP5, HDAC6, KIF2A, LATS2, NDEL1, PARD3, PPP1R2, PLK1, RASSF1, TACC3, p53/TP53 and TPX2. Phosphorylates MCRS1 which is required for MCRS1-mediated kinetochore fiber assembly and mitotic progression. Regulates KIF2A tubulin depolymerase activity. Required for normal axon formation. Plays a role in microtubule remodeling during neurite extension. Important for microtubule formation and/or stabilization. Also acts as a key regulatory component of the p53/TP53 pathway, and particularly the checkpoint-response pathways critical for oncogenic transformation of cells, by phosphorylating and stabilizating p53/TP53. Phosphorylates its own inhibitors, the protein phosphatase type 1 (PP1) isoforms, to inhibit their activity. Inhibits cilia outgrowth. Required for cilia disassembly via phosphorylation of HDAC6 and subsequent deacetylation of alpha-tubulin. Regulates protein levels of the anti-apoptosis protein BIRC5 by suppressing the expression of the SCF(FBXL7) E3 ubiquitin-protein ligase substrate adapter FBXL7 through the phosphorylation of the transcription factor FOXP1. The chain is Aurora kinase A from Rattus norvegicus (Rat).